A 319-amino-acid polypeptide reads, in one-letter code: Triplex capsid protein 2 (319 aa).

It belongs to the herpesviridae TRX2 protein family. Interacts with TRX1 and major capisd protein/MCP.

It is found in the virion. The protein resides in the host nucleus. Structural component of the T=16 icosahedral capsid. The capsid is composed of pentamers and hexamers of major capsid protein/MCP, which are linked together by heterotrimers called triplexes. These triplexes are formed by a single molecule of triplex protein 1/TRX1 and two copies of triplex protein 2/TRX2. Additionally, TRX1 is required for efficient transport of TRX2 to the nucleus, which is the site of capsid assembly. The polypeptide is Triplex capsid protein 2 (Gallid herpesvirus 2 (strain Chicken/Md5/ATCC VR-987) (GaHV-2)).